The sequence spans 131 residues: UPF0102 protein YraN (131 aa).

The protein belongs to the UPF0102 family.

The protein is UPF0102 protein YraN of Salmonella typhimurium (strain LT2 / SGSC1412 / ATCC 700720).